Consider the following 196-residue polypeptide: Pyridoxal 5'-phosphate synthase subunit PdxT (196 aa).

47–49 (GES) contacts L-glutamine. The active-site Nucleophile is C79. L-glutamine contacts are provided by residues R106 and 134-135 (IR). Catalysis depends on charge relay system residues H170 and E172.

Belongs to the glutaminase PdxT/SNO family. As to quaternary structure, in the presence of PdxS, forms a dodecamer of heterodimers. Only shows activity in the heterodimer.

The enzyme catalyses aldehydo-D-ribose 5-phosphate + D-glyceraldehyde 3-phosphate + L-glutamine = pyridoxal 5'-phosphate + L-glutamate + phosphate + 3 H2O + H(+). It catalyses the reaction L-glutamine + H2O = L-glutamate + NH4(+). Its pathway is cofactor biosynthesis; pyridoxal 5'-phosphate biosynthesis. Functionally, catalyzes the hydrolysis of glutamine to glutamate and ammonia as part of the biosynthesis of pyridoxal 5'-phosphate. The resulting ammonia molecule is channeled to the active site of PdxS. The polypeptide is Pyridoxal 5'-phosphate synthase subunit PdxT (Bacillus cereus (strain Q1)).